Reading from the N-terminus, the 495-residue chain is Chromosomal replication initiator protein DnaA (495 aa).

The domain I, interacts with DnaA modulators stretch occupies residues 1–83; it reads MSVALWQQCL…KVQLTVGSRR (83 aa). The domain II stretch occupies residues 83 to 158; it reads RNVAMSSPRD…QVEGSLKHQS (76 aa). Residues 86 to 127 are disordered; that stretch reads AMSSPRDLGAPVSATTMNASRPTEAPAVHAAPRAKGDYADEQ. Positions 159-375 are domain III, AAA+ region; that stretch reads GLNPNFTFET…GALKKVIADS (217 aa). The ATP site is built by G203, G205, K206, and T207. Positions 376-495 are domain IV, binds dsDNA; the sequence is HFMGKPITQD…YKNLLRLLTS (120 aa).

The protein belongs to the DnaA family. As to quaternary structure, oligomerizes as a right-handed, spiral filament on DNA at oriC.

The protein resides in the cytoplasm. Plays an essential role in the initiation and regulation of chromosomal replication. ATP-DnaA binds to the origin of replication (oriC) to initiate formation of the DNA replication initiation complex once per cell cycle. Binds the DnaA box (a 9 base pair repeat at the origin) and separates the double-stranded (ds)DNA. Forms a right-handed helical filament on oriC DNA; dsDNA binds to the exterior of the filament while single-stranded (ss)DNA is stabiized in the filament's interior. The ATP-DnaA-oriC complex binds and stabilizes one strand of the AT-rich DNA unwinding element (DUE), permitting loading of DNA polymerase. After initiation quickly degrades to an ADP-DnaA complex that is not apt for DNA replication. Binds acidic phospholipids. The sequence is that of Chromosomal replication initiator protein DnaA from Chromohalobacter salexigens (strain ATCC BAA-138 / DSM 3043 / CIP 106854 / NCIMB 13768 / 1H11).